We begin with the raw amino-acid sequence, 842 residues long: Elongation factor 2 (842 aa).

Residues 17-253 (SNVRNMSVIA…LWGENYFNPK (237 aa)) enclose the tr-type G domain. GTP contacts are provided by residues 26–33 (AHVDHGKS), 104–108 (DSPGH), and 158–161 (NKVD). At serine 568 the chain carries Phosphoserine. At threonine 574 the chain carries Phosphothreonine. Residue histidine 699 is modified to Diphthamide.

Belongs to the TRAFAC class translation factor GTPase superfamily. Classic translation factor GTPase family. EF-G/EF-2 subfamily.

Its subcellular location is the cytoplasm. In terms of biological role, catalyzes the GTP-dependent ribosomal translocation step during translation elongation. During this step, the ribosome changes from the pre-translocational (PRE) to the post-translocational (POST) state as the newly formed A-site-bound peptidyl-tRNA and P-site-bound deacylated tRNA move to the P and E sites, respectively. Catalyzes the coordinated movement of the two tRNA molecules, the mRNA and conformational changes in the ribosome. The chain is Elongation factor 2 (eft201) from Schizosaccharomyces pombe (strain 972 / ATCC 24843) (Fission yeast).